We begin with the raw amino-acid sequence, 507 residues long: Glucose-6-phosphate isomerase (507 aa).

The active-site Proton donor is the Glu-338. Residues His-369 and Lys-479 contribute to the active site.

It belongs to the GPI family.

The protein resides in the cytoplasm. It carries out the reaction alpha-D-glucose 6-phosphate = beta-D-fructose 6-phosphate. Its pathway is carbohydrate biosynthesis; gluconeogenesis. It participates in carbohydrate degradation; glycolysis; D-glyceraldehyde 3-phosphate and glycerone phosphate from D-glucose: step 2/4. Its function is as follows. Provides a gateway for fructose into the Entner-Doudouroff pathway. Catalyzes the reversible isomerization of glucose-6-phosphate to fructose-6-phosphate. The sequence is that of Glucose-6-phosphate isomerase from Zymomonas mobilis subsp. mobilis (strain ATCC 31821 / ZM4 / CP4).